Here is a 490-residue protein sequence, read N- to C-terminus: Bifunctional protein HldE (490 aa).

The interval Met1 to Ala330 is ribokinase. An ATP-binding site is contributed by Asn205–Glu208. Asp275 is an active-site residue. Positions Phe358–Ala490 are cytidylyltransferase.

This sequence in the N-terminal section; belongs to the carbohydrate kinase PfkB family. It in the C-terminal section; belongs to the cytidylyltransferase family. In terms of assembly, homodimer.

The enzyme catalyses D-glycero-beta-D-manno-heptose 7-phosphate + ATP = D-glycero-beta-D-manno-heptose 1,7-bisphosphate + ADP + H(+). It carries out the reaction D-glycero-beta-D-manno-heptose 1-phosphate + ATP + H(+) = ADP-D-glycero-beta-D-manno-heptose + diphosphate. It participates in nucleotide-sugar biosynthesis; ADP-L-glycero-beta-D-manno-heptose biosynthesis; ADP-L-glycero-beta-D-manno-heptose from D-glycero-beta-D-manno-heptose 7-phosphate: step 1/4. The protein operates within nucleotide-sugar biosynthesis; ADP-L-glycero-beta-D-manno-heptose biosynthesis; ADP-L-glycero-beta-D-manno-heptose from D-glycero-beta-D-manno-heptose 7-phosphate: step 3/4. Its function is as follows. Catalyzes the phosphorylation of D-glycero-D-manno-heptose 7-phosphate at the C-1 position to selectively form D-glycero-beta-D-manno-heptose-1,7-bisphosphate. Functionally, catalyzes the ADP transfer from ATP to D-glycero-beta-D-manno-heptose 1-phosphate, yielding ADP-D-glycero-beta-D-manno-heptose. The sequence is that of Bifunctional protein HldE from Rhodopseudomonas palustris (strain BisB18).